The primary structure comprises 125 residues: Prepro-urotensin II-alpha (125 aa).

An N-terminal signal peptide occupies residues Met-1 to Ala-21. Residues Gln-109 to Arg-111 constitute a propeptide that is removed on maturation. Cys-119 and Cys-124 are disulfide-bonded.

This sequence belongs to the urotensin-2 family.

The protein resides in the secreted. In terms of biological role, urotensin is found in the teleost caudal neurosecretory system. It has a suggested role in osmoregulation and as a corticotropin-releasing factor. The non-hormonal portion of this precursor may be a urotensin binding protein, urophysin. In Cyprinus carpio (Common carp), this protein is Prepro-urotensin II-alpha.